Consider the following 190-residue polypeptide: Threonylcarbamoyl-AMP synthase (190 aa).

A YrdC-like domain is found at 7–190 (RAALSDVLQA…ALTGKQFRQG (184 aa)).

It belongs to the SUA5 family. TsaC subfamily.

It localises to the cytoplasm. It catalyses the reaction L-threonine + hydrogencarbonate + ATP = L-threonylcarbamoyladenylate + diphosphate + H2O. Required for the formation of a threonylcarbamoyl group on adenosine at position 37 (t(6)A37) in tRNAs that read codons beginning with adenine. Catalyzes the conversion of L-threonine, HCO(3)(-)/CO(2) and ATP to give threonylcarbamoyl-AMP (TC-AMP) as the acyladenylate intermediate, with the release of diphosphate. In Yersinia enterocolitica serotype O:8 / biotype 1B (strain NCTC 13174 / 8081), this protein is Threonylcarbamoyl-AMP synthase.